The following is a 190-amino-acid chain: Large ribosomal subunit protein bL9 (190 aa).

Belongs to the bacterial ribosomal protein bL9 family.

In terms of biological role, binds to the 23S rRNA. This is Large ribosomal subunit protein bL9 from Rhodobacter capsulatus (strain ATCC BAA-309 / NBRC 16581 / SB1003).